Consider the following 187-residue polypeptide: Large ribosomal subunit protein uL6 (187 aa).

It belongs to the universal ribosomal protein uL6 family. In terms of assembly, part of the 50S ribosomal subunit.

In terms of biological role, this protein binds to the 23S rRNA, and is important in its secondary structure. It is located near the subunit interface in the base of the L7/L12 stalk, and near the tRNA binding site of the peptidyltransferase center. This Thermosynechococcus vestitus (strain NIES-2133 / IAM M-273 / BP-1) protein is Large ribosomal subunit protein uL6.